We begin with the raw amino-acid sequence, 314 residues long: MTALILKRVAQAIPVMLIVAILTFLLMKLLPGDPAILIAGDGASPETVERIRVELGLDQPTVVQLGQWLWNLFHFDLGRSFLLSQPVSQAIAERLPVTISLALLAFAITIPVGIIMGVVAAYLRDSWFDMGVMSLALLGVSVPSFWLAILAVILFSVTLGWFPSAGYVPFLDSPLGWLRSLILPASILALFQIGYLARMTRSEMLEVMDQDYIRTARSKGVSEYSVLSTHAFRNALVSVLTVSGYIFSLLIGGSVVIEQIFALPGLGRLLVQAILARDLPVVQGTMLFLGFLFVAINVLVDILYTIADPRVHYD.

6 helical membrane-spanning segments follow: residues 12-32 (AIPV…LLPG), 101-121 (LALL…VVAA), 135-155 (LALL…VILF), 177-197 (WLRS…GYLA), 237-257 (VSVL…SVVI), and 286-306 (MLFL…LYTI). The ABC transmembrane type-1 domain occupies 95–304 (LPVTISLALL…AINVLVDILY (210 aa)).

This sequence belongs to the binding-protein-dependent transport system permease family. As to quaternary structure, the complex is composed of two ATP-binding proteins (BRA1094), two transmembrane proteins (BRA1092 and BRA1093) and a solute-binding protein (BRA1090).

Its subcellular location is the cell inner membrane. In terms of biological role, probably part of an ABC transporter complex that could be involved in peptide import. Probably responsible for the translocation of the substrate across the membrane. The protein is Putative peptide transport system permease protein BRA1092/BS1330_II1084 of Brucella suis biovar 1 (strain 1330).